The sequence spans 156 residues: Ribosomal RNA large subunit methyltransferase H (156 aa).

Residues leucine 73, glycine 104, and 123-128 each bind S-adenosyl-L-methionine; that span reads LSALTL.

Belongs to the RNA methyltransferase RlmH family. Homodimer.

It is found in the cytoplasm. The enzyme catalyses pseudouridine(1915) in 23S rRNA + S-adenosyl-L-methionine = N(3)-methylpseudouridine(1915) in 23S rRNA + S-adenosyl-L-homocysteine + H(+). Its function is as follows. Specifically methylates the pseudouridine at position 1915 (m3Psi1915) in 23S rRNA. This chain is Ribosomal RNA large subunit methyltransferase H, found in Shewanella sediminis (strain HAW-EB3).